A 1230-amino-acid polypeptide reads, in one-letter code: Myosin-1 (1230 aa).

The interval 1 to 32 (MGISRRPKADKNASAADSAPGGKPNIQKAQFD) is disordered. Residues 39–713 (VGVSDLTLIS…TLFALEHMRD (675 aa)) form the Myosin motor domain. Position 132 to 139 (132 to 139 (GESGAGKT)) interacts with ATP. Residues 403-485 (SIGILDIYGF…PGVFSAMKDA (83 aa)) are actin-binding. IQ domains are found at residues 717–737 (HNMA…RIEA) and 738–763 (ATRI…KGHQ). The region spanning 771–961 (RRRYSLLGSR…TIHTQAGEPP (191 aa)) is the TH1 domain. 3 disordered regions span residues 945 to 1018 (QDHY…AARP), 1033 to 1065 (TRNT…PVSK), and 1116 to 1230 (AYLE…EDDW). Positions 1033–1045 (TRNTSVQSTQSTR) are enriched in polar residues. Composition is skewed to pro residues over residues 1047-1062 (VPPP…PPAP) and 1122-1142 (TPPP…PGPP). In terms of domain architecture, SH3 spans 1064–1123 (SKEPQYRVLYEFAGQSANEFSLKQGEIVTVLQKETNGWWLTKNVRGQGWAPTAYLEEVTP). Positions 1179-1214 (RDSGMSISSNGSGNNSGRSTPTPSLAGGLAEALRAR) are enriched in low complexity.

This sequence belongs to the TRAFAC class myosin-kinesin ATPase superfamily. Myosin family.

It localises to the cytoplasm. The protein localises to the cytoskeleton. It is found in the actin patch. In terms of biological role, type-I myosin implicated in the organization of the actin cytoskeleton. Required for proper actin cytoskeleton polarization. At the cell cortex, assembles in patch-like structures together with proteins from the actin-polymerizing machinery and promotes actin assembly. Functions as actin nucleation-promoting factor (NPF) for the Arp2/3 complex. The polypeptide is Myosin-1 (myoA) (Sclerotinia sclerotiorum (strain ATCC 18683 / 1980 / Ss-1) (White mold)).